The sequence spans 738 residues: Alcohol dehydrogenase (quinone), dehydrogenase subunit (738 aa).

A signal peptide spans 1-35 (MISAVFGKRRSLSRTLTAGTICAALISGYATMASA). Glu97 contributes to the pyrroloquinoline quinone binding site. An intrachain disulfide couples Cys143 to Cys144. Arg149 lines the pyrroloquinoline quinone pocket. Glu217 provides a ligand contact to Ca(2+). A pyrroloquinoline quinone-binding site is contributed by Thr278. Positions 298 and 343 each coordinate Ca(2+). Asp343 serves as the catalytic Proton acceptor. The pyrroloquinoline quinone site is built by Lys370 and Ile584. Residues 634 to 738 (FDSKRTDNGY…NADGIPEQLP (105 aa)) form the Cytochrome c domain. Heme c-binding residues include Cys650, Cys653, His654, and Met693.

Belongs to the bacterial PQQ dehydrogenase family. The alcohol dehydrogenase multicomponent enzyme system is composed of a dehydrogenase subunit I (AdhA) and a cytochrome c subunit II (AdhB). Requires pyrroloquinoline quinone as cofactor. Ca(2+) is required as a cofactor. It depends on heme c as a cofactor.

The protein localises to the cell membrane. The catalysed reaction is ethanol + a ubiquinone = a ubiquinol + acetaldehyde. Functionally, dehydrogenase component of the alcohol dehydrogenase multicomponent enzyme system which is involved in the production of acetic acid and in the ethanol oxidase respiratory chain. Quinohemoprotein alcohol dehydrogenase (ADH) catalyzes the oxidation of ethanol to acetaldehyde by transferring electrons to the ubiquinone embedded in the membrane phospholipids. The electrons transfer from ethanol to membranous ubiquinone occurs from pyrroloquinoline quinone (PQQ) to one heme c in subunit I (AdhA), and finally to two heme c in subunit II (AdhB). Besides ubiquinone reduction, ADH also has a ubiquinol (QH2) oxidation reaction which mediates electron transfer from ubiquinol to the non-energy generating bypass oxidase system. The electrons transfer occurs from ubiquinol (QH2) to the additional heme c within subunit II (AdhB). This chain is Alcohol dehydrogenase (quinone), dehydrogenase subunit (adhA), found in Gluconacetobacter polyoxogenes (Acetobacter polyoxogenes).